The sequence spans 694 residues: Methionine--tRNA ligase (694 aa).

Residues 12-22 carry the 'HIGH' region motif; it reads PYANGPLHLGH. Residues Cys-143, Cys-146, Cys-156, and Cys-159 each contribute to the Zn(2+) site. Positions 330–334 match the 'KMSKS' region motif; sequence KMSKS. An ATP-binding site is contributed by Lys-333. A disordered region spans residues 552–577; sequence APAAPAATTKPAPSKADAAPAAVANP. The region spanning 591–694 is the tRNA-binding domain; sequence DFAKLDLRIG…AGAQPGMPVR (104 aa).

Belongs to the class-I aminoacyl-tRNA synthetase family. MetG type 1 subfamily. As to quaternary structure, homodimer. Zn(2+) serves as cofactor.

It is found in the cytoplasm. It carries out the reaction tRNA(Met) + L-methionine + ATP = L-methionyl-tRNA(Met) + AMP + diphosphate. Is required not only for elongation of protein synthesis but also for the initiation of all mRNA translation through initiator tRNA(fMet) aminoacylation. The chain is Methionine--tRNA ligase from Xanthomonas campestris pv. campestris (strain B100).